A 365-amino-acid polypeptide reads, in one-letter code: Peptide chain release factor 2 (365 aa).

Gln251 is modified (N5-methylglutamine).

This sequence belongs to the prokaryotic/mitochondrial release factor family. In terms of processing, methylated by PrmC. Methylation increases the termination efficiency of RF2.

The protein resides in the cytoplasm. In terms of biological role, peptide chain release factor 2 directs the termination of translation in response to the peptide chain termination codons UGA and UAA. This Campylobacter jejuni subsp. jejuni serotype O:23/36 (strain 81-176) protein is Peptide chain release factor 2.